A 627-amino-acid chain; its full sequence is Pescadillo homolog (627 aa).

Residues Arg-321–Ile-414 enclose the BRCT domain. 3 disordered regions span residues Pro-436–Gln-471, Tyr-489–Arg-562, and Phe-596–Lys-627. Residues Ser-453 and Ser-457 each carry the phosphoserine modification. 2 stretches are compositionally biased toward acidic residues: residues Ser-453 to Gln-471 and Val-498 to Asp-521. Over residues Glu-522–Lys-533 the composition is skewed to basic and acidic residues. Residues Lys-540–Leu-549 show a composition bias toward basic residues. 2 stretches are compositionally biased toward basic and acidic residues: residues His-550–Leu-559 and Phe-596–Lys-605. A compositionally biased stretch (low complexity) spans Ala-616–Lys-627.

Belongs to the pescadillo family.

It is found in the nucleus. The protein localises to the nucleolus. Its subcellular location is the nucleoplasm. In terms of biological role, required for maturation of ribosomal RNAs and formation of the large ribosomal subunit. The sequence is that of Pescadillo homolog from Drosophila ananassae (Fruit fly).